We begin with the raw amino-acid sequence, 122 residues long: Large ribosomal subunit protein uL14 (122 aa).

This sequence belongs to the universal ribosomal protein uL14 family. As to quaternary structure, part of the 50S ribosomal subunit. Forms a cluster with proteins L3 and L19. In the 70S ribosome, L14 and L19 interact and together make contacts with the 16S rRNA in bridges B5 and B8.

In terms of biological role, binds to 23S rRNA. Forms part of two intersubunit bridges in the 70S ribosome. The sequence is that of Large ribosomal subunit protein uL14 from Chlorobaculum parvum (strain DSM 263 / NCIMB 8327) (Chlorobium vibrioforme subsp. thiosulfatophilum).